Reading from the N-terminus, the 183-residue chain is Ferritin heavy chain (183 aa).

Met1 carries the N-acetylmethionine modification. Thr2 bears the N-acetylthreonine; in Ferritin heavy chain, N-terminally processed mark. One can recognise a Ferritin-like diiron domain in the interval 11–160 (QNYHQDSEAA…DHVTNLRKMG (150 aa)). 5 residues coordinate Fe cation: Glu28, Glu63, His66, Glu108, and Gln142. 2 positions are modified to phosphoserine: Ser179 and Ser183.

The protein belongs to the ferritin family. Oligomer of 24 subunits. There are two types of subunits: L (light) chain and H (heavy) chain. The major chain can be light or heavy, depending on the species and tissue type. The functional molecule forms a roughly spherical shell with a diameter of 12 nm and contains a central cavity into which the insoluble mineral iron core is deposited. Interacts with NCOA4; NCOA4 promotes targeting of the iron-binding ferritin complex to autolysosomes following starvation or iron depletion.

It is found in the cytoplasm. Its subcellular location is the lysosome. The protein resides in the cytoplasmic vesicle. The protein localises to the autophagosome. It carries out the reaction 4 Fe(2+) + O2 + 4 H(+) = 4 Fe(3+) + 2 H2O. In terms of biological role, stores iron in a soluble, non-toxic, readily available form. Important for iron homeostasis. Has ferroxidase activity. Iron is taken up in the ferrous form and deposited as ferric hydroxides after oxidation. Also plays a role in delivery of iron to cells. Mediates iron uptake in capsule cells of the developing kidney. Delivery to lysosomes is mediated by the cargo receptor NCOA4 for autophagic degradation and release of iron. The polypeptide is Ferritin heavy chain (FTH1) (Felis catus (Cat)).